The sequence spans 48 residues: ATP synthase protein 8 (48 aa).

A helical membrane pass occupies residues 13-32; the sequence is VVFTLISLSFIFFVFSKYIL.

The protein belongs to the ATPase protein 8 family. F-type ATPases have 2 components, CF(1) - the catalytic core - and CF(0) - the membrane proton channel.

The protein resides in the mitochondrion membrane. In terms of biological role, mitochondrial membrane ATP synthase (F(1)F(0) ATP synthase or Complex V) produces ATP from ADP in the presence of a proton gradient across the membrane which is generated by electron transport complexes of the respiratory chain. F-type ATPases consist of two structural domains, F(1) - containing the extramembraneous catalytic core and F(0) - containing the membrane proton channel, linked together by a central stalk and a peripheral stalk. During catalysis, ATP synthesis in the catalytic domain of F(1) is coupled via a rotary mechanism of the central stalk subunits to proton translocation. Part of the complex F(0) domain. Minor subunit located with subunit a in the membrane. This is ATP synthase protein 8 (ATP8) from Trichophyton rubrum (Athlete's foot fungus).